A 350-amino-acid chain; its full sequence is Enoyl-[acyl-carrier-protein] reductase, mitochondrial (350 aa).

The transit peptide at 1-12 (MWLGLRLFHRPF) directs the protein to the mitochondrion. Residue Tyr-68 is the Proton donor of the active site. Residues Asn-141, 167–170 (NSGV), 190–192 (RDR), 259–262 (YGGM), 284–286 (FWV), and Lys-345 contribute to the NADP(+) site.

The protein belongs to the zinc-containing alcohol dehydrogenase family. Quinone oxidoreductase subfamily. Homodimer. Expressed in the developing pronephros.

Its subcellular location is the mitochondrion. It catalyses the reaction a 2,3-saturated acyl-[ACP] + NADP(+) = a (2E)-enoyl-[ACP] + NADPH + H(+). Functionally, catalyzes the NADPH-dependent reduction of trans-2-enoyl thioesters in mitochondrial fatty acid synthesis (fatty acid synthesis type II). Fatty acid chain elongation in mitochondria uses acyl carrier protein (ACP) as an acyl group carrier, but the enzyme accepts both ACP and CoA thioesters as substrates in vitro. May provide the octanoyl chain used for lipoic acid biosynthesis, regulating protein lipoylation and mitochondrial respiratory activity. Involved in iron homeostasis; affecting Fe-S cluster assembly and ceramide metabolism. Required for proper morphology and bioenergetic functions of mitochondria. Required for maintenance of neurons. Functions in pronephros development, regulating late differentiation of all pronephric tubule segments. This chain is Enoyl-[acyl-carrier-protein] reductase, mitochondrial (mecr), found in Xenopus tropicalis (Western clawed frog).